The sequence spans 308 residues: Glutaminase (308 aa).

Ser-66, Asn-117, Glu-161, Asn-168, Tyr-192, Tyr-244, and Val-262 together coordinate substrate.

The protein belongs to the glutaminase family. In terms of assembly, homotetramer.

The enzyme catalyses L-glutamine + H2O = L-glutamate + NH4(+). The sequence is that of Glutaminase from Salmonella choleraesuis (strain SC-B67).